Here is a 165-residue protein sequence, read N- to C-terminus: HTH-type transcriptional regulator MmpR5 (165 aa).

One can recognise an HTH marR-type domain in the interval 1–151 (MSVNDGVDQM…LLAYMENVVS (151 aa)). The H-T-H motif DNA-binding region spans 53 to 76 (SEELATALAASSGGISTNARMLIQ).

As to quaternary structure, homodimer.

Its function is as follows. Controls the expression level of the Mmps2-MmpL2, MmpS4-MmpL4, and MmpS5-MmpL5 transport systems. Also controls its own expression. Acts by binding directly to the promoter regions. The chain is HTH-type transcriptional regulator MmpR5 from Mycobacterium tuberculosis (strain ATCC 25618 / H37Rv).